Consider the following 266-residue polypeptide: Large ribosomal subunit protein uL4 (266 aa).

Belongs to the universal ribosomal protein uL4 family. Part of the 50S ribosomal subunit.

Functionally, one of the primary rRNA binding proteins, this protein initially binds near the 5'-end of the 23S rRNA. It is important during the early stages of 50S assembly. It makes multiple contacts with different domains of the 23S rRNA in the assembled 50S subunit and ribosome. Its function is as follows. Forms part of the polypeptide exit tunnel. In Sulfurisphaera tokodaii (strain DSM 16993 / JCM 10545 / NBRC 100140 / 7) (Sulfolobus tokodaii), this protein is Large ribosomal subunit protein uL4.